A 302-amino-acid polypeptide reads, in one-letter code: Ribosomal RNA small subunit methyltransferase H (302 aa).

S-adenosyl-L-methionine contacts are provided by residues 36–38 (GGH), aspartate 56, phenylalanine 84, aspartate 99, and glutamine 106.

This sequence belongs to the methyltransferase superfamily. RsmH family.

It localises to the cytoplasm. The catalysed reaction is cytidine(1402) in 16S rRNA + S-adenosyl-L-methionine = N(4)-methylcytidine(1402) in 16S rRNA + S-adenosyl-L-homocysteine + H(+). In terms of biological role, specifically methylates the N4 position of cytidine in position 1402 (C1402) of 16S rRNA. The protein is Ribosomal RNA small subunit methyltransferase H of Flavobacterium johnsoniae (strain ATCC 17061 / DSM 2064 / JCM 8514 / BCRC 14874 / CCUG 350202 / NBRC 14942 / NCIMB 11054 / UW101) (Cytophaga johnsonae).